The following is a 494-amino-acid chain: Sulfate adenylyltransferase subunit 1 (494 aa).

The 215-residue stretch at 28 to 242 folds into the tr-type G domain; that stretch reads TRPLRLITCG…TLELATVRST (215 aa). Residues 37-44 form a G1 region; that stretch reads GSVDDGKS. Residue 37-44 participates in GTP binding; sequence GSVDDGKS. The segment at 94 to 98 is G2; the sequence is GITID. Positions 115-118 are G3; sequence DTPG. GTP-binding positions include 115–119 and 170–173; these read DTPGH and NKID. The segment at 170–173 is G4; the sequence is NKID. Residues 207–209 form a G5 region; the sequence is SAL.

It belongs to the TRAFAC class translation factor GTPase superfamily. Classic translation factor GTPase family. CysN/NodQ subfamily. In terms of assembly, heterodimer composed of CysD, the smaller subunit, and CysN.

The catalysed reaction is sulfate + ATP + H(+) = adenosine 5'-phosphosulfate + diphosphate. It participates in sulfur metabolism; hydrogen sulfide biosynthesis; sulfite from sulfate: step 1/3. Functionally, with CysD forms the ATP sulfurylase (ATPS) that catalyzes the adenylation of sulfate producing adenosine 5'-phosphosulfate (APS) and diphosphate, the first enzymatic step in sulfur assimilation pathway. APS synthesis involves the formation of a high-energy phosphoric-sulfuric acid anhydride bond driven by GTP hydrolysis by CysN coupled to ATP hydrolysis by CysD. This chain is Sulfate adenylyltransferase subunit 1, found in Agrobacterium fabrum (strain C58 / ATCC 33970) (Agrobacterium tumefaciens (strain C58)).